The following is a 946-amino-acid chain: DNA primase (946 aa).

The segment at 596–626 is disordered; that stretch reads RDTEEDEDGKEDKNNVPDNGVFQKTTSSVDT. Residues 617–626 are compositionally biased toward polar residues; the sequence is FQKTTSSVDT. The CHC2-type zinc finger occupies 881 to 920; the sequence is CLNYTHRNPQETVQVFIDLRTEHSYALWASLWSRCFTKKC.

Belongs to the herpesviridae DNA primase family. Associates with the helicase and the primase-associated factor to form the helicase-primase factor.

The protein localises to the host nucleus. Its function is as follows. Essential component of the helicase/primase complex. Unwinds the DNA at the replication forks and generates single-stranded DNA for both leading and lagging strand synthesis. The primase initiates primer synthesis and thereby produces large amount of short RNA primers on the lagging strand that the polymerase elongates using dNTPs. The protein is DNA primase (UL70) of Human cytomegalovirus (strain AD169) (HHV-5).